We begin with the raw amino-acid sequence, 207 residues long: Guanylate kinase (207 aa).

Residues 4–184 form the Guanylate kinase-like domain; the sequence is GTLYIVSAPS…ALSDLKTIIR (181 aa). 11 to 18 contacts ATP; the sequence is APSGAGKS.

This sequence belongs to the guanylate kinase family.

It is found in the cytoplasm. It carries out the reaction GMP + ATP = GDP + ADP. Its function is as follows. Essential for recycling GMP and indirectly, cGMP. This chain is Guanylate kinase, found in Yersinia pestis bv. Antiqua (strain Antiqua).